Reading from the N-terminus, the 61-residue chain is Small ribosomal subunit protein uS14B (61 aa).

Zn(2+)-binding residues include cysteine 24, cysteine 27, cysteine 40, and cysteine 43.

It belongs to the universal ribosomal protein uS14 family. Zinc-binding uS14 subfamily. Part of the 30S ribosomal subunit. Contacts proteins S3 and S10. It depends on Zn(2+) as a cofactor.

In terms of biological role, binds 16S rRNA, required for the assembly of 30S particles and may also be responsible for determining the conformation of the 16S rRNA at the A site. This is Small ribosomal subunit protein uS14B from Mycobacterium bovis (strain ATCC BAA-935 / AF2122/97).